A 798-amino-acid polypeptide reads, in one-letter code: Serine/threonine-protein kinase SIK2 (798 aa).

The region spanning 26 to 277 is the Protein kinase domain; sequence YDIERTLGKG…ISQIKQHKWM (252 aa). ATP is bound by residues 32–40 and K55; that span reads LGKGNFAVV. D148 (proton acceptor) is an active-site residue. T181 carries the phosphothreonine modification. Phosphoserine is present on S185. One can recognise a UBA domain in the interval 302 to 342; sequence DYNEQVLGIMQTLGIDRQRTVESLQNSSYNHFAAIYYLLLE. Polar residues predominate over residues 351–361; it reads QLSSRPATGRQ. Positions 351–382 are disordered; it reads QLSSRPATGRQQRPRSSEISNAEMPQDSLTSE. S575 bears the Phosphoserine mark. The interval 672-691 is disordered; sequence ACPQTSQTSATNGLPPSDSA. A compositionally biased stretch (polar residues) spans 673–685; it reads CPQTSQTSATNGL.

This sequence belongs to the protein kinase superfamily. CAMK Ser/Thr protein kinase family. SNF1 subfamily. Requires Mg(2+) as cofactor. In terms of processing, phosphorylated at Thr-181 by STK11/LKB1 in complex with STE20-related adapter-alpha (STRADA) pseudo kinase and CAB39. Ubiquitously expressed in embryonic tissue.

The protein localises to the cytoplasm. It catalyses the reaction L-seryl-[protein] + ATP = O-phospho-L-seryl-[protein] + ADP + H(+). The catalysed reaction is L-threonyl-[protein] + ATP = O-phospho-L-threonyl-[protein] + ADP + H(+). Activated by phosphorylation on Thr-181. In terms of biological role, phosphorylates IRS1 in insulin-stimulated adipocytes, potentially modulating the efficiency of insulin signal transduction. Inhibits CREB activity by phosphorylating and repressing the CREB-specific coactivators, CRTC1-3. This Gallus gallus (Chicken) protein is Serine/threonine-protein kinase SIK2 (SIK2).